Here is an 88-residue protein sequence, read N- to C-terminus: Small ribosomal subunit protein uS17 (88 aa).

The protein belongs to the universal ribosomal protein uS17 family. Part of the 30S ribosomal subunit.

Its function is as follows. One of the primary rRNA binding proteins, it binds specifically to the 5'-end of 16S ribosomal RNA. The polypeptide is Small ribosomal subunit protein uS17 (Lactobacillus acidophilus (strain ATCC 700396 / NCK56 / N2 / NCFM)).